Here is a 246-residue protein sequence, read N- to C-terminus: Hsp70 nucleotide exchange factor fes-1 (246 aa).

Residues 23 to 40 (QSYHSNGAPTPNNNSGPA) show a composition bias toward polar residues. The segment at 23–63 (QSYHSNGAPTPNNNSGPATGTGAVATSPAPQVTGSGPRPVD) is disordered. 4 ARM repeats span residues 48–92 (TSPA…DPSP), 113–152 (LDNA…TAVQ), 155–196 (QKTQ…SAVR), and 214–244 (HEVL…NKAK).

Belongs to the FES1 family.

It localises to the cytoplasm. In terms of biological role, functions as a nucleotide exchange factor (NEF) for Hsp70 chaperones which accelerates the release of ADP. Required for fully efficient Hsp70-mediated folding of proteins. This chain is Hsp70 nucleotide exchange factor fes-1 (fes-1), found in Neurospora crassa (strain ATCC 24698 / 74-OR23-1A / CBS 708.71 / DSM 1257 / FGSC 987).